A 46-amino-acid chain; its full sequence is Mu-hexatoxin-Mg2a (46 aa).

Intrachain disulfides connect Cys-3-Cys-18, Cys-10-Cys-24, Cys-17-Cys-36, Cys-21-Cys-43, and Cys-26-Cys-34.

The protein belongs to the neurotoxin 02 (plectoxin) family. 02 (plectoxin) subfamily. In terms of tissue distribution, expressed by the venom gland.

It localises to the secreted. Competes for binding at site 3 of the insect voltage-gated sodium channel (Nav). Insecticidal neurotoxin. Causes temporary paralysis to lepidopteran larvae (10.3 nmol/g) or to crickets (doses from 0.93 to 119 ug/g). Is not toxic to mice when injected intracranially (high doses). The sequence is that of Mu-hexatoxin-Mg2a from Macrothele gigas (Japanese funnel web spider).